A 1479-amino-acid polypeptide reads, in one-letter code: DNA-directed RNA polymerase subunit beta'' (1479 aa).

Zn(2+)-binding residues include Cys-220, Cys-296, Cys-303, and Cys-306. Disordered regions lie at residues 618 to 640 (TRAE…REDE) and 663 to 756 (LEDE…KKEG). Composition is skewed to acidic residues over residues 622-631 (DSEEEYETLE), 704-717 (DEYG…EDEY), and 731-749 (LEED…PEED).

The protein belongs to the RNA polymerase beta' chain family. RpoC2 subfamily. In terms of assembly, in plastids the minimal PEP RNA polymerase catalytic core is composed of four subunits: alpha, beta, beta', and beta''. When a (nuclear-encoded) sigma factor is associated with the core the holoenzyme is formed, which can initiate transcription. It depends on Zn(2+) as a cofactor.

The protein localises to the plastid. It is found in the chloroplast. The enzyme catalyses RNA(n) + a ribonucleoside 5'-triphosphate = RNA(n+1) + diphosphate. In terms of biological role, DNA-dependent RNA polymerase catalyzes the transcription of DNA into RNA using the four ribonucleoside triphosphates as substrates. This chain is DNA-directed RNA polymerase subunit beta'', found in Triticum aestivum (Wheat).